The sequence spans 303 residues: Lipase chaperone (303 aa).

Residues 7 to 23 (TLAAACAAWLAWWAWPD) traverse the membrane as a helical segment.

Belongs to the lipase chaperone family.

It localises to the cell inner membrane. Functionally, may be involved in the folding of the extracellular lipase during its passage through the periplasm. In Chromobacterium violaceum (strain ATCC 12472 / DSM 30191 / JCM 1249 / CCUG 213 / NBRC 12614 / NCIMB 9131 / NCTC 9757 / MK), this protein is Lipase chaperone (lifO).